The following is a 489-amino-acid chain: Cysteine--tRNA ligase (489 aa).

Cys29 is a binding site for Zn(2+). The 'HIGH' region motif lies at Val31–His41. Cys215, His240, and Glu244 together coordinate Zn(2+). The 'KMSKS' region signature appears at Lys272–Ser276. ATP is bound at residue Lys275.

Belongs to the class-I aminoacyl-tRNA synthetase family. In terms of assembly, monomer. Requires Zn(2+) as cofactor.

Its subcellular location is the cytoplasm. It carries out the reaction tRNA(Cys) + L-cysteine + ATP = L-cysteinyl-tRNA(Cys) + AMP + diphosphate. This Trichodesmium erythraeum (strain IMS101) protein is Cysteine--tRNA ligase.